We begin with the raw amino-acid sequence, 112 residues long: Large ribosomal subunit protein uL22 (112 aa).

The protein belongs to the universal ribosomal protein uL22 family. In terms of assembly, part of the 50S ribosomal subunit.

Its function is as follows. This protein binds specifically to 23S rRNA; its binding is stimulated by other ribosomal proteins, e.g. L4, L17, and L20. It is important during the early stages of 50S assembly. It makes multiple contacts with different domains of the 23S rRNA in the assembled 50S subunit and ribosome. In terms of biological role, the globular domain of the protein is located near the polypeptide exit tunnel on the outside of the subunit, while an extended beta-hairpin is found that lines the wall of the exit tunnel in the center of the 70S ribosome. The polypeptide is Large ribosomal subunit protein uL22 (Finegoldia magna (strain ATCC 29328 / DSM 20472 / WAL 2508) (Peptostreptococcus magnus)).